A 1417-amino-acid polypeptide reads, in one-letter code: DNA-directed RNA polymerase subunit beta' (1417 aa).

Zn(2+) is bound by residues Cys68, Cys70, Cys83, and Cys86. Residues Asp458, Asp460, and Asp462 each coordinate Mg(2+). The Zn(2+) site is built by Cys811, Cys884, Cys891, and Cys894.

It belongs to the RNA polymerase beta' chain family. The RNAP catalytic core consists of 2 alpha, 1 beta, 1 beta' and 1 omega subunit. When a sigma factor is associated with the core the holoenzyme is formed, which can initiate transcription. It depends on Mg(2+) as a cofactor. The cofactor is Zn(2+).

The enzyme catalyses RNA(n) + a ribonucleoside 5'-triphosphate = RNA(n+1) + diphosphate. Functionally, DNA-dependent RNA polymerase catalyzes the transcription of DNA into RNA using the four ribonucleoside triphosphates as substrates. The protein is DNA-directed RNA polymerase subunit beta' of Francisella tularensis subsp. tularensis (strain FSC 198).